The sequence spans 920 residues: MEEYKDTLNLNTTTFSMKGNLSVNEPKTYAKWQEQQVFKRMQNRKDNHGDFTLHDGPPYANGHLHLGHALNKILKDIVVKREYFKGNKIYYTPGWDCHGLPIEQQILERLEKEKTSLENPTLFREKCRDHAKKFLEIQKNEFLQLGVLGDFEDPYKTMDFKFEASIYRALVEVAKKGLLKERHKPIYWSYACESALAEAEVEYKMKKSPSIFVAFGLKKESLEKLKVKKASLVIWTTTPWTLYANVAIALKKDAIYALTQKGYLVAKALHEKLAALGVVDSEIAHEFNANDLEYLKASNPLNQRDSLITLGEHVGLEDGTGAVHTAPGHGEEDYYLGLRYNLEVLMSVDEKGCYDEGIIHNQLLDESYLGEHVFKAQKRIIEQLGDSLLLEQEIEHSYPYCWRTHKPVIYRATTQWFILMDEPFIQNDGSQKTLREVALDAIEKVEFVPSSGKNRLKTMIENRPDWCLSRQRKWGVPLAFFIDKRTNKPCFESEVLEHVAHLFEKKGCDVWWESSVKDLLPPSYQEDATHYEKVMHILDVWFDSGSTFKAVLEDYHGEKGQSPSDVILEGSDQHRGWFQSSLLIGCVLNNQAPFKKVITHGFIVDEKGEKMSKSKGNVVSLDNLLKKHGSDVVRLWVAFNDYQNDLRVSQTFFIQTEQHYKKFRNTLKFLLANFSDMDLKNLERSHNFSPLDHFILEALETISVGVNSAFEEHDFVKGLNVLMAFVTNELSGIYLDACKDSLYCDSKNNEKRQAIQMVLLATASKLCYFLAPILTHTIEEVLEHSQVLCAFLQAKDVFDLKDISVSEKLHLKEFKKPENFEAVLALRSAFNEELDRLKKEGVIKNSLECAIEVKEKALRENLVEELLMVSFVGIAKEKLSETPAFTLFKAPFYKCPRCWRFKSELENTPCKRCEEVLKER.

Residues 58–68 (PYANGHLHLGH) carry the 'HIGH' region motif. Residue Glu-569 coordinates L-isoleucyl-5'-AMP. A 'KMSKS' region motif is present at residues 610 to 614 (KMSKS). ATP is bound at residue Lys-613. Residues Cys-895, Cys-898, Cys-910, and Cys-913 each coordinate Zn(2+).

Belongs to the class-I aminoacyl-tRNA synthetase family. IleS type 1 subfamily. Monomer. Zn(2+) is required as a cofactor.

It localises to the cytoplasm. The catalysed reaction is tRNA(Ile) + L-isoleucine + ATP = L-isoleucyl-tRNA(Ile) + AMP + diphosphate. Its function is as follows. Catalyzes the attachment of isoleucine to tRNA(Ile). As IleRS can inadvertently accommodate and process structurally similar amino acids such as valine, to avoid such errors it has two additional distinct tRNA(Ile)-dependent editing activities. One activity is designated as 'pretransfer' editing and involves the hydrolysis of activated Val-AMP. The other activity is designated 'posttransfer' editing and involves deacylation of mischarged Val-tRNA(Ile). The chain is Isoleucine--tRNA ligase from Helicobacter pylori (strain HPAG1).